We begin with the raw amino-acid sequence, 320 residues long: Glutathione synthetase (320 aa).

One can recognise an ATP-grasp domain in the interval 127–312; that stretch reads KLAITEFPRF…VAGLMIDALE (186 aa). 153 to 209 is a binding site for ATP; the sequence is LAEHEDIILKPLDGMGGAGIFRIQNTDHNIGVIIETLTRYGTRTIMAQRFLPEIREG. Mg(2+)-binding residues include Glu283 and Asn285.

Belongs to the prokaryotic GSH synthase family. Mg(2+) is required as a cofactor. Requires Mn(2+) as cofactor.

The enzyme catalyses gamma-L-glutamyl-L-cysteine + glycine + ATP = glutathione + ADP + phosphate + H(+). It participates in sulfur metabolism; glutathione biosynthesis; glutathione from L-cysteine and L-glutamate: step 2/2. This Nitrosomonas europaea (strain ATCC 19718 / CIP 103999 / KCTC 2705 / NBRC 14298) protein is Glutathione synthetase.